The following is a 192-amino-acid chain: A-type ATP synthase subunit E (192 aa).

It belongs to the V-ATPase E subunit family. In terms of assembly, has multiple subunits with at least A(3), B(3), C, D, E, F, H, I and proteolipid K(x).

The protein resides in the cell membrane. In terms of biological role, component of the A-type ATP synthase that produces ATP from ADP in the presence of a proton gradient across the membrane. The protein is A-type ATP synthase subunit E of Sulfolobus acidocaldarius (strain ATCC 33909 / DSM 639 / JCM 8929 / NBRC 15157 / NCIMB 11770).